The chain runs to 406 residues: Phosphopentomutase (406 aa).

Positions 10, 305, 310, 346, 347, and 358 each coordinate Mn(2+).

The protein belongs to the phosphopentomutase family. The cofactor is Mn(2+).

Its subcellular location is the cytoplasm. It catalyses the reaction 2-deoxy-alpha-D-ribose 1-phosphate = 2-deoxy-D-ribose 5-phosphate. The catalysed reaction is alpha-D-ribose 1-phosphate = D-ribose 5-phosphate. It functions in the pathway carbohydrate degradation; 2-deoxy-D-ribose 1-phosphate degradation; D-glyceraldehyde 3-phosphate and acetaldehyde from 2-deoxy-alpha-D-ribose 1-phosphate: step 1/2. Its function is as follows. Isomerase that catalyzes the conversion of deoxy-ribose 1-phosphate (dRib-1-P) and ribose 1-phosphate (Rib-1-P) to deoxy-ribose 5-phosphate (dRib-5-P) and ribose 5-phosphate (Rib-5-P), respectively. This Rhizobium leguminosarum bv. trifolii (strain WSM2304) protein is Phosphopentomutase.